A 580-amino-acid chain; its full sequence is MKTNNVVYCGNVDNKLVGKEVVIKGWIKKNRKLGSLIFIDIYDITGIVQVVVEEENKFFNNCLQTPKESVVEVIGIVRKRSNVNKELKTGEFEIDLKEFKLYSKAETPPFLIQDDTDGLEDLRLKYRYLDLRRPVMQNNIINRGKIINLFRSFLVKNNFNEIETPYLSKQTPEGARDYLVPTRSKKFFALPQSPQIYKQLLMVSGMDRYFQIARCFRDEDLRADRQPEFTQIDIETSFLSDLEIQSIVQEMFIYVFKEFFNIKLKTPFTRMSYSDAIEYYGSDKPDIRFENKIMNLTNYFKDTNFKIFKSIYESKNRISAVFVEDNIVKQDIKKLEKLAQDNKAKGLAYLYIENGKMSSGSIANVIESEIIEKICKDNKLSNGTLFFVADKYEITQQALGAIRKEFVNISKKIKMNEEFAFLWVVDWPLFEYSEEEKRYVSAHHPFTMPTAETLDTFDKDPANAKAIAYDLVLNGFEIGGGSLRIYNSELQTRMFKFLGLNDSQVKEKFGFIINAFKYGVPPHGGIAFGIERILMIMLNTNSIRDVIAFPKNSSGVDLLFETPSDVSNESLKELGIKLEK.

Glutamate 173 lines the L-aspartate pocket. The tract at residues 195–198 (QIYK) is aspartate. Arginine 217 is an L-aspartate binding site. Residues 217-219 (RDE) and glutamine 226 contribute to the ATP site. Histidine 443 is a binding site for L-aspartate. Glutamate 477 lines the ATP pocket. Arginine 484 contributes to the L-aspartate binding site. 529–532 (GIER) lines the ATP pocket.

It belongs to the class-II aminoacyl-tRNA synthetase family. Type 1 subfamily. As to quaternary structure, homodimer.

It is found in the cytoplasm. It catalyses the reaction tRNA(Asp) + L-aspartate + ATP = L-aspartyl-tRNA(Asp) + AMP + diphosphate. Catalyzes the attachment of L-aspartate to tRNA(Asp) in a two-step reaction: L-aspartate is first activated by ATP to form Asp-AMP and then transferred to the acceptor end of tRNA(Asp). In Malacoplasma penetrans (strain HF-2) (Mycoplasma penetrans), this protein is Aspartate--tRNA ligase.